A 480-amino-acid polypeptide reads, in one-letter code: Gamma-aminobutyric acid receptor subunit rho-1 (480 aa).

The signal sequence occupies residues 1 to 21 (MLAVQNMKFGIFLLWWGWVLA). At 22-281 (AESTAHWPGR…LYINFTLRRH (260 aa)) the chain is on the extracellular side. The span at 29–38 (PGREVHEPSR) shows a compositional bias: basic and acidic residues. The interval 29–67 (PGREVHEPSRKGSRPQRQRRGAHDDAHKQGSPILRRSSD) is disordered. Residues 39–48 (KGSRPQRQRR) show a composition bias toward basic residues. Arg-126 serves as a coordination point for 4-aminobutanoate. Asn-141 is a glycosylation site (N-linked (GlcNAc...) asparagine). Ser-190 contributes to the 4-aminobutanoate binding site. Cysteines 199 and 213 form a disulfide. Glu-218 provides a ligand contact to 4-aminobutanoate. N-linked (GlcNAc...) asparagine glycosylation is found at Asn-235 and Asn-275. Residues 282–302 (IFFFLLQTYFPATLMVMLSWV) form a helical membrane-spanning segment. Residues 303 to 314 (SFWIDRRAVPAR) lie on the Cytoplasmic side of the membrane. The chain crosses the membrane as a helical span at residues 315 to 335 (VPLGITTVLTMSTIITGVNAS). Over 336–346 (MPRVSYIKAVD) the chain is Extracellular. A helical membrane pass occupies residues 347 to 367 (IYLWVSFVFVFLSVLEYAAVN). Residues 368 to 458 (YLTTVQERKE…MRINTHAIDK (91 aa)) lie on the Cytoplasmic side of the membrane. Residues 459-479 (YSRIIFPAAYILFNLIYWSIF) traverse the membrane as a helical segment. Position 480 (Ser-480) is a topological domain, extracellular.

Belongs to the ligand-gated ion channel (TC 1.A.9) family. Gamma-aminobutyric acid receptor (TC 1.A.9.5) subfamily. GABRR1 sub-subfamily. In terms of assembly, three rho subunits (rho-1/GBRR1, rho-2/GBRR2 and rho-3/GBRR3) coassemble either to form functional homopentamers or heteropentamers. Rho-1/GBRR1 subunits can also associate with alpha-1/GBRA1 subunits to form a functional GABAAR. Interacts with SQSTM1. As to expression, expressed in the cerebellum.

The protein resides in the postsynaptic cell membrane. It localises to the cell membrane. It catalyses the reaction chloride(in) = chloride(out). Inhibited by TPMPA, a rho-specific antagonist, when forming a homopentamer. In contrast with other GABAARs, rho-1 GABAAR is not inhibited by bicuculline when forming a homopentamer. Its function is as follows. Rho subunit of the pentameric ligand-gated chloride channels responsible for mediating the effects of gamma-aminobutyric acid (GABA), the major inhibitory neurotransmitter in the brain. Rho-containing GABA-gated chloride channels are a subclass of GABA(A) receptors (GABAARs) entirely composed of rho subunits, where GABA molecules bind at the rho intersubunit interfaces. When activated by GABA, rho-GABAARs selectively allow the flow of chloride anions across the cell membrane down their electrochemical gradient. Rho-1 subunits are primarily expressed in retina where rho-1-containing GABAARs play a role in retinal neurotransmission. Rho-1 GABAARs are also involved in neuronal tonic (extrasynaptic) and phasic (synaptic) transmission in the Purkinje neurons of the cerebellum. Rho-1 GABAARs may also contribute to the regulation of glial development in the cerebellum by controlling extrasynaptic transmission. The sequence is that of Gamma-aminobutyric acid receptor subunit rho-1 from Mus musculus (Mouse).